Here is a 187-residue protein sequence, read N- to C-terminus: uncharacterized protein (187 aa).

Residues 127-172 (KQPQVTLTQLQEELDEAKTRLALKEKELLEALSEISKLRLQLSNQL) are a coiled coil.

This is an uncharacterized protein from Tomato torrado virus (isolate Solanum lycopersicum/Spain/PRIToTV0301/-) (ToTV).